Consider the following 429-residue polypeptide: Serine hydroxymethyltransferase 1 (429 aa).

Residues Leu-125 and 129 to 131 (GHL) each bind (6S)-5,6,7,8-tetrahydrofolate. Lys-234 bears the N6-(pyridoxal phosphate)lysine mark.

It belongs to the SHMT family. As to quaternary structure, homodimer. The cofactor is pyridoxal 5'-phosphate.

Its subcellular location is the cytoplasm. It carries out the reaction (6R)-5,10-methylene-5,6,7,8-tetrahydrofolate + glycine + H2O = (6S)-5,6,7,8-tetrahydrofolate + L-serine. Its pathway is one-carbon metabolism; tetrahydrofolate interconversion. It functions in the pathway amino-acid biosynthesis; glycine biosynthesis; glycine from L-serine: step 1/1. In terms of biological role, catalyzes the reversible interconversion of serine and glycine with tetrahydrofolate (THF) serving as the one-carbon carrier. This reaction serves as the major source of one-carbon groups required for the biosynthesis of purines, thymidylate, methionine, and other important biomolecules. Also exhibits THF-independent aldolase activity toward beta-hydroxyamino acids, producing glycine and aldehydes, via a retro-aldol mechanism. The chain is Serine hydroxymethyltransferase 1 from Agrobacterium fabrum (strain C58 / ATCC 33970) (Agrobacterium tumefaciens (strain C58)).